The primary structure comprises 335 residues: Dihydroorotate dehydrogenase (quinone) (335 aa).

FMN contacts are provided by residues A59–K63 and T83. Substrate is bound at residue K63. Residue N108–F112 participates in substrate binding. N136 and N169 together coordinate FMN. A substrate-binding site is contributed by N169. Catalysis depends on S172, which acts as the Nucleophile. N174 provides a ligand contact to substrate. Positions 214 and 242 each coordinate FMN. N243 to T244 is a substrate binding site. FMN-binding positions include G265, G294, and Y315–S316.

It belongs to the dihydroorotate dehydrogenase family. Type 2 subfamily. As to quaternary structure, monomer. The cofactor is FMN.

Its subcellular location is the cell membrane. It catalyses the reaction (S)-dihydroorotate + a quinone = orotate + a quinol. It participates in pyrimidine metabolism; UMP biosynthesis via de novo pathway; orotate from (S)-dihydroorotate (quinone route): step 1/1. In terms of biological role, catalyzes the conversion of dihydroorotate to orotate with quinone as electron acceptor. This Glaesserella parasuis serovar 5 (strain SH0165) (Haemophilus parasuis) protein is Dihydroorotate dehydrogenase (quinone).